Consider the following 392-residue polypeptide: V-type proton ATPase subunit C (392 aa).

At Ala-2 the chain carries N-acetylalanine.

This sequence belongs to the V-ATPase C subunit family. As to quaternary structure, V-ATPase is a heteromultimeric enzyme composed of a peripheral catalytic V1 complex (components A to H) attached to an integral membrane V0 proton pore complex (components: a, c, c', c'', d, e, f and VOA1). Interacts directly with VMA4.

It is found in the vacuole membrane. Subunit of the V1 complex of vacuolar(H+)-ATPase (V-ATPase), a multisubunit enzyme composed of a peripheral complex (V1) that hydrolyzes ATP and a membrane integral complex (V0) that translocates protons. V-ATPase is responsible for acidifying and maintaining the pH of intracellular compartments. Subunit C is necessary for the assembly of the catalytic sector of the enzyme and is likely to have a specific function in its catalytic activity. Reversibly leaves the enzyme after glucose depletion, causing the catalytic subcomplex V1 to detach from the V0 section. This chain is V-type proton ATPase subunit C, found in Saccharomyces cerevisiae (strain ATCC 204508 / S288c) (Baker's yeast).